Consider the following 26-residue polypeptide: Omega-conotoxin CVIC (26 aa).

3 disulfide bridges follow: Cys1–Cys16, Cys8–Cys20, and Cys15–Cys26. Position 26 is a cysteine amide (Cys26).

It belongs to the conotoxin O1 superfamily. In terms of tissue distribution, expressed by the venom duct.

It is found in the secreted. Omega-conotoxins act at presynaptic membranes, they bind and block voltage-gated calcium channels (Cav). This toxin blocks N-, P- and Q-type calcium channels. This Conus catus (Cat cone) protein is Omega-conotoxin CVIC.